Reading from the N-terminus, the 129-residue chain is Small ribosomal subunit protein uS8c (129 aa).

The protein belongs to the universal ribosomal protein uS8 family. Part of the 30S ribosomal subunit.

The protein resides in the plastid. It is found in the chloroplast. Functionally, one of the primary rRNA binding proteins, it binds directly to 16S rRNA central domain where it helps coordinate assembly of the platform of the 30S subunit. The protein is Small ribosomal subunit protein uS8c (rps8) of Oltmannsiellopsis viridis (Marine flagellate).